Reading from the N-terminus, the 158-residue chain is NADPH-dependent 7-cyano-7-deazaguanine reductase (158 aa).

Cys56 serves as the catalytic Thioimide intermediate. Asp63 (proton donor) is an active-site residue. Residues 78 to 80 and 97 to 98 contribute to the substrate site; these read VES and HE.

Belongs to the GTP cyclohydrolase I family. QueF type 1 subfamily.

Its subcellular location is the cytoplasm. The catalysed reaction is 7-aminomethyl-7-carbaguanine + 2 NADP(+) = 7-cyano-7-deazaguanine + 2 NADPH + 3 H(+). It functions in the pathway tRNA modification; tRNA-queuosine biosynthesis. Its function is as follows. Catalyzes the NADPH-dependent reduction of 7-cyano-7-deazaguanine (preQ0) to 7-aminomethyl-7-deazaguanine (preQ1). The sequence is that of NADPH-dependent 7-cyano-7-deazaguanine reductase from Rhodopseudomonas palustris (strain HaA2).